A 422-amino-acid chain; its full sequence is MNVLIIGKGGREHTLAWKAAQSSLVENVFAAPGNDGMAASAQLVNIEESDHAGLVSFAKQNQVGLTIVGPEVPLIEGLVDEFEKAGLHVFGPSKAAAIIEGSKQFAKDLMKKYDIPTAEYETFTSFDEAKAYVQEKGAPIVIKADGLAAGKGVTVAMTEEEAIACLHDFLEDEKFGDASASVVIEEYLSGEEFSLMAFVKGEKVYPMVIAQDHKRAFDGDKGPNTGGMGAYSPVPQISEETVRHAVETIVKPAAKAMVQEGRSFTGVLYAGLMLTENGSKVIEFNARFGDPETQVVLPRMESDLVQVLLDLLDDKEVDLRWKDTAAVSVVLASEGYPESYAKGTPIGSLAAETEQVVVFHAGTKAEGGEFVTNGGRVANVTAFDETFEAARDRVYKAVDEIFKPGLFFRKDIGARALKAAQK.

The ATP-grasp domain maps to 107-313; that stretch reads KDLMKKYDIP…LVQVLLDLLD (207 aa). 133–194 is an ATP binding site; the sequence is VQEKGAPIVI…EEYLSGEEFS (62 aa). Mg(2+) is bound by residues E283 and N285.

This sequence belongs to the GARS family. Mg(2+) is required as a cofactor. Requires Mn(2+) as cofactor.

It catalyses the reaction 5-phospho-beta-D-ribosylamine + glycine + ATP = N(1)-(5-phospho-beta-D-ribosyl)glycinamide + ADP + phosphate + H(+). It participates in purine metabolism; IMP biosynthesis via de novo pathway; N(1)-(5-phospho-D-ribosyl)glycinamide from 5-phospho-alpha-D-ribose 1-diphosphate: step 2/2. This is Phosphoribosylamine--glycine ligase from Bacillus subtilis (strain 168).